The following is a 298-amino-acid chain: Nucleotide-binding protein GK3066 (298 aa).

An ATP-binding site is contributed by 17–24 (GMSGAGKT). Residue 68-71 (DLRS) participates in GTP binding.

It belongs to the RapZ-like family.

Functionally, displays ATPase and GTPase activities. In Geobacillus kaustophilus (strain HTA426), this protein is Nucleotide-binding protein GK3066.